We begin with the raw amino-acid sequence, 257 residues long: Phosphatidylglycerol--prolipoprotein diacylglyceryl transferase (257 aa).

4 helical membrane passes run 12 to 32 (FSIR…VYLA), 49 to 69 (FILM…VIFE), 83 to 103 (IWNG…LLVI), and 109 to 129 (LINP…AQAI). An a 1,2-diacyl-sn-glycero-3-phospho-(1'-sn-glycerol)-binding site is contributed by arginine 131. The next 3 helical transmembrane spans lie at 167–187 (VPTF…IMSI), 197–217 (GEVA…IEGM), and 226–246 (GLRV…VMII).

Belongs to the Lgt family.

The protein localises to the cell membrane. The enzyme catalyses L-cysteinyl-[prolipoprotein] + a 1,2-diacyl-sn-glycero-3-phospho-(1'-sn-glycerol) = an S-1,2-diacyl-sn-glyceryl-L-cysteinyl-[prolipoprotein] + sn-glycerol 1-phosphate + H(+). It functions in the pathway protein modification; lipoprotein biosynthesis (diacylglyceryl transfer). Catalyzes the transfer of the diacylglyceryl group from phosphatidylglycerol to the sulfhydryl group of the N-terminal cysteine of a prolipoprotein, the first step in the formation of mature lipoproteins. This chain is Phosphatidylglycerol--prolipoprotein diacylglyceryl transferase, found in Streptococcus agalactiae serotype Ia (strain ATCC 27591 / A909 / CDC SS700).